A 243-amino-acid polypeptide reads, in one-letter code: 1-(5-phosphoribosyl)-5-[(5-phosphoribosylamino)methylideneamino] imidazole-4-carboxamide isomerase (243 aa).

Asp-8 functions as the Proton acceptor in the catalytic mechanism. Asp-129 (proton donor) is an active-site residue.

This sequence belongs to the HisA/HisF family.

It localises to the cytoplasm. The catalysed reaction is 1-(5-phospho-beta-D-ribosyl)-5-[(5-phospho-beta-D-ribosylamino)methylideneamino]imidazole-4-carboxamide = 5-[(5-phospho-1-deoxy-D-ribulos-1-ylimino)methylamino]-1-(5-phospho-beta-D-ribosyl)imidazole-4-carboxamide. It functions in the pathway amino-acid biosynthesis; L-histidine biosynthesis; L-histidine from 5-phospho-alpha-D-ribose 1-diphosphate: step 4/9. This Geobacter sp. (strain M21) protein is 1-(5-phosphoribosyl)-5-[(5-phosphoribosylamino)methylideneamino] imidazole-4-carboxamide isomerase.